Here is a 735-residue protein sequence, read N- to C-terminus: Non-structural protein 1 (735 aa).

Disordered regions lie at residues 18–50, 138–170, and 218–290; these read YAST…SHTM, PEPE…NTPQ, and TSIP…SPMY. The span at 38–47 shows a compositional bias: low complexity; it reads APASLTSTDS. Positions 218–234 are enriched in low complexity; sequence TSIPACSPAPSSLPSIL. A compositionally biased stretch (polar residues) spans 235–247; that stretch reads TMQTRPPSPSSKS. The span at 254 to 274 shows a compositional bias: basic and acidic residues; that stretch reads LPERRPTRRPEHIANDEDYNR.

The protein belongs to the aquareoviridae NS1 protein family.

Non-structural protein with ssRNA-binding activity. Is probably involved in the formation of viral inclusions, where the assembly of cores and the replication of viral RNA are thought to occur. The chain is Non-structural protein 1 (S4) from Ctenopharyngodon idella (Grass carp).